The following is a 642-amino-acid chain: Regulator of MON1-CCZ1 complex (642 aa).

Residues 462–616 (RPYTESILML…KLYETLSFPK (155 aa)) enclose the Mic1 domain.

This sequence belongs to the RMC1 family. As to quaternary structure, component of the Mon1-Ccz1 guanyl-nucleotide exchange factor complex made up of Mon1, Ccz1 and Bulli; the interaction of Bulli with the Mon1-Ccz1 heterodimer is mediated via the C-terminal Mic1 domain of Bulli. Mon1 and Ccz1 form a stable complex which displays Rab7 GEF activity with or without Bulli; GEF activity is enhanced by Bulli possibly by improving membrane association of the complex.

It localises to the late endosome. Positive regulator of the Rab7 guanyl-nucleotide exchange activity of the Mon1-Ccz1 complex, possibly by enhancing its endosomal membrane association. As part of the Mon1-Ccz1 complex involved in endolysosomal biogenesis possibly by mediating Rab conversion, the replacement of Rab5 with Rab7 during late endosome maturation. This chain is Regulator of MON1-CCZ1 complex, found in Drosophila melanogaster (Fruit fly).